We begin with the raw amino-acid sequence, 559 residues long: Urocanate hydratase (559 aa).

Residues 50–51 (GG), Gln128, 174–176 (GMG), Asp194, Arg199, 240–241 (NA), 261–265 (QTSAH), 271–272 (YI), and Tyr320 contribute to the NAD(+) site. Cys408 is an active-site residue. Gly490 serves as a coordination point for NAD(+).

The protein belongs to the urocanase family. Requires NAD(+) as cofactor.

It is found in the cytoplasm. It carries out the reaction 4-imidazolone-5-propanoate = trans-urocanate + H2O. Its pathway is amino-acid degradation; L-histidine degradation into L-glutamate; N-formimidoyl-L-glutamate from L-histidine: step 2/3. Catalyzes the conversion of urocanate to 4-imidazolone-5-propionate. The protein is Urocanate hydratase of Halalkalibacterium halodurans (strain ATCC BAA-125 / DSM 18197 / FERM 7344 / JCM 9153 / C-125) (Bacillus halodurans).